The following is a 105-amino-acid chain: Thioredoxin (105 aa).

Residues 2–105 (VKSVGNLADF…KLEETIKSLV (104 aa)) enclose the Thioredoxin domain. Active-site nucleophile residues include Cys32 and Cys35. Cys32 and Cys35 form a disulfide bridge. An S-nitrosocysteine mark is found at Cys69 and Cys73.

The protein belongs to the thioredoxin family. Post-translationally, may be nitrosylated on several cysteine residues, depending on the oxidation state. Nitrosylated Cys-73 may serve as donor for nitrosylation of target proteins.

The protein localises to the nucleus. Its subcellular location is the cytoplasm. It localises to the secreted. Its function is as follows. Participates in various redox reactions through the reversible oxidation of its active center dithiol to a disulfide and catalyzes dithiol-disulfide exchange reactions. Plays a role in the reversible S-nitrosylation of cysteine residues in target proteins, and thereby contributes to the response to intracellular nitric oxide. Nitrosylates the active site Cys of CASP3 in response to nitric oxide (NO), and thereby inhibits caspase-3 activity. Induces the FOS/JUN AP-1 DNA binding activity in ionizing radiation (IR) cells through its oxidation/reduction status and stimulates AP-1 transcriptional activity. The chain is Thioredoxin (TXN) from Gallus gallus (Chicken).